Reading from the N-terminus, the 181-residue chain is MGRLLLEPQANAPANANPKPKGGINDTYFDTNMVIILAALLCALICALSLNSALRCVLRITRRFTSDDQVSNASNANANLGRLAAATGLKKQALKQIPVGLYGSGIIDMKATECLICLGDFEDGEKVRVLPKCNHGFHVRCIDTWLLSRSSCPTCRQSLLLEQPSPMAVSRRDEDMVVSIV.

The helical transmembrane segment at 34-54 (VIILAALLCALICALSLNSAL) threads the bilayer. Residues 114–156 (CLICLGDFEDGEKVRVLPKCNHGFHVRCIDTWLLSRSSCPTCR) form an RING-type; atypical zinc finger.

Belongs to the RING-type zinc finger family. ATL subfamily.

The protein localises to the membrane. The catalysed reaction is S-ubiquitinyl-[E2 ubiquitin-conjugating enzyme]-L-cysteine + [acceptor protein]-L-lysine = [E2 ubiquitin-conjugating enzyme]-L-cysteine + N(6)-ubiquitinyl-[acceptor protein]-L-lysine.. It participates in protein modification; protein ubiquitination. This is RING-H2 finger protein ATL72 (ATL72) from Arabidopsis thaliana (Mouse-ear cress).